Here is a 267-residue protein sequence, read N- to C-terminus: Hydroxyethylthiazole kinase (267 aa).

Met46 lines the substrate pocket. Positions 121 and 167 each coordinate ATP. Ala194 serves as a coordination point for substrate.

It belongs to the Thz kinase family. Mg(2+) serves as cofactor.

The catalysed reaction is 5-(2-hydroxyethyl)-4-methylthiazole + ATP = 4-methyl-5-(2-phosphooxyethyl)-thiazole + ADP + H(+). The protein operates within cofactor biosynthesis; thiamine diphosphate biosynthesis; 4-methyl-5-(2-phosphoethyl)-thiazole from 5-(2-hydroxyethyl)-4-methylthiazole: step 1/1. Catalyzes the phosphorylation of the hydroxyl group of 4-methyl-5-beta-hydroxyethylthiazole (THZ). This chain is Hydroxyethylthiazole kinase, found in Rhizobium leguminosarum bv. trifolii (strain WSM2304).